Here is a 277-residue protein sequence, read N- to C-terminus: Ras suppressor protein 1 (277 aa).

The tract at residues 1–23 (MSKSLKKLVEESREKNQPEVDMS) is disordered. Ser-2 bears the N-acetylserine mark. Over residues 7 to 23 (KLVEESREKNQPEVDMS) the composition is skewed to basic and acidic residues. 7 LRR repeats span residues 41 to 63 (HITQLVLSHNKLTTVPPNIAELK), 64 to 85 (NLEVLNFFNNQIEELPTQISSL), 87 to 109 (KLKHLNLGMNRLNTLPRGFGSLP), 110 to 133 (ALEVLDLTYNNLNENSLPGNFFYL), 135 to 156 (TLRALYLSDNDFEILPPDIGKL), 158 to 179 (KLQILSLRDNDLISLPKEIGEL), and 181 to 202 (QLKELHIQGNRLTVLPPELGNL). The segment at 250–277 (MQANPEPPKKNNDKSKKISRKPLAAKNK) is disordered. Residues 256 to 265 (PPKKNNDKSK) are compositionally biased toward basic and acidic residues.

In terms of biological role, potentially plays a role in the Ras signal transduction pathway. Capable of suppressing v-Ras transformation in vitro. The sequence is that of Ras suppressor protein 1 (RSU1) from Bos taurus (Bovine).